The sequence spans 521 residues: Bifunctional purine biosynthesis protein PurH (521 aa).

The MGS-like domain occupies 1 to 145 (MIKQALISVS…KNHRDVTVVV (145 aa)).

It belongs to the PurH family.

The catalysed reaction is (6R)-10-formyltetrahydrofolate + 5-amino-1-(5-phospho-beta-D-ribosyl)imidazole-4-carboxamide = 5-formamido-1-(5-phospho-D-ribosyl)imidazole-4-carboxamide + (6S)-5,6,7,8-tetrahydrofolate. It catalyses the reaction IMP + H2O = 5-formamido-1-(5-phospho-D-ribosyl)imidazole-4-carboxamide. Its pathway is purine metabolism; IMP biosynthesis via de novo pathway; 5-formamido-1-(5-phospho-D-ribosyl)imidazole-4-carboxamide from 5-amino-1-(5-phospho-D-ribosyl)imidazole-4-carboxamide (10-formyl THF route): step 1/1. It participates in purine metabolism; IMP biosynthesis via de novo pathway; IMP from 5-formamido-1-(5-phospho-D-ribosyl)imidazole-4-carboxamide: step 1/1. The chain is Bifunctional purine biosynthesis protein PurH from Paraburkholderia xenovorans (strain LB400).